A 510-amino-acid polypeptide reads, in one-letter code: 2-isopropylmalate synthase (510 aa).

In terms of domain architecture, Pyruvate carboxyltransferase spans 5 to 267 (LIIFDTTLRD…DTRIDSVHIV (263 aa)). The Mn(2+) site is built by D14, H202, H204, and N238. The segment at 392 to 510 (KLLSLTAHSE…SKLERAHPQV (119 aa)) is regulatory domain.

The protein belongs to the alpha-IPM synthase/homocitrate synthase family. LeuA type 1 subfamily. In terms of assembly, homodimer. Mn(2+) is required as a cofactor.

It localises to the cytoplasm. It carries out the reaction 3-methyl-2-oxobutanoate + acetyl-CoA + H2O = (2S)-2-isopropylmalate + CoA + H(+). It functions in the pathway amino-acid biosynthesis; L-leucine biosynthesis; L-leucine from 3-methyl-2-oxobutanoate: step 1/4. Its function is as follows. Catalyzes the condensation of the acetyl group of acetyl-CoA with 3-methyl-2-oxobutanoate (2-ketoisovalerate) to form 3-carboxy-3-hydroxy-4-methylpentanoate (2-isopropylmalate). The chain is 2-isopropylmalate synthase from Nitrosospira multiformis (strain ATCC 25196 / NCIMB 11849 / C 71).